A 155-amino-acid chain; its full sequence is Protein archease-like (155 aa).

Residues Asp26, Asp154, and Ile155 each coordinate Ca(2+).

This sequence belongs to the archease family.

Its function is as follows. Component of the tRNA-splicing ligase complex required to facilitate the enzymatic turnover of catalytic subunit RtcB (F16A11.2). The chain is Protein archease-like from Caenorhabditis elegans.